A 387-amino-acid chain; its full sequence is Transcription termination/antitermination protein NusA (387 aa).

Residues 145 to 209 (GQVLTGVVTR…AKGPSLLVSR (65 aa)) form the S1 motif domain. Residues 312-379 (AKKARVKVTK…ARERKAREEF (68 aa)) enclose the KH domain.

This sequence belongs to the NusA family. In terms of assembly, monomer. Binds directly to the core enzyme of the DNA-dependent RNA polymerase and to nascent RNA.

Its subcellular location is the cytoplasm. Participates in both transcription termination and antitermination. The protein is Transcription termination/antitermination protein NusA of Thermus thermophilus (strain ATCC 27634 / DSM 579 / HB8).